We begin with the raw amino-acid sequence, 376 residues long: UDP-N-acetylglucosamine--N-acetylmuramyl-(pentapeptide) pyrophosphoryl-undecaprenol N-acetylglucosamine transferase (376 aa).

UDP-N-acetyl-alpha-D-glucosamine-binding positions include 11-13, asparagine 117, arginine 160, serine 208, and glutamine 310; that span reads TGG.

The protein belongs to the glycosyltransferase 28 family. MurG subfamily.

The protein resides in the cell inner membrane. The catalysed reaction is di-trans,octa-cis-undecaprenyl diphospho-N-acetyl-alpha-D-muramoyl-L-alanyl-D-glutamyl-meso-2,6-diaminopimeloyl-D-alanyl-D-alanine + UDP-N-acetyl-alpha-D-glucosamine = di-trans,octa-cis-undecaprenyl diphospho-[N-acetyl-alpha-D-glucosaminyl-(1-&gt;4)]-N-acetyl-alpha-D-muramoyl-L-alanyl-D-glutamyl-meso-2,6-diaminopimeloyl-D-alanyl-D-alanine + UDP + H(+). Its pathway is cell wall biogenesis; peptidoglycan biosynthesis. Its function is as follows. Cell wall formation. Catalyzes the transfer of a GlcNAc subunit on undecaprenyl-pyrophosphoryl-MurNAc-pentapeptide (lipid intermediate I) to form undecaprenyl-pyrophosphoryl-MurNAc-(pentapeptide)GlcNAc (lipid intermediate II). This Rickettsia rickettsii (strain Iowa) protein is UDP-N-acetylglucosamine--N-acetylmuramyl-(pentapeptide) pyrophosphoryl-undecaprenol N-acetylglucosamine transferase.